The primary structure comprises 661 residues: Serine/threonine-protein phosphatase rdgC (661 aa).

The IQ domain maps to 7 to 32 (RAAIFIQKWYRRHQARREMQRRCNWQ). A catalytic region spans residues 105–413 (IDLLIDVFRK…HFVQYISAAS (309 aa)). Mn(2+)-binding residues include Asp-158, His-160, Asp-187, and Asn-219. The active-site Proton donor is His-220. Mn(2+) contacts are provided by His-271 and His-360. 3 consecutive EF-hand domains span residues 441–476 (DHRD…VTKL), 526–561 (ANKA…LVAH), and 566–601 (YSKA…SDLH). Positions 539, 541, 543, 545, 550, 579, 581, 583, 585, and 590 each coordinate Ca(2+). Residues 606-625 (QDENIRRRSTGRPSVAKTAT) form a disordered region.

The protein belongs to the PPP phosphatase family. Mn(2+) is required as a cofactor. Expressed in the visual system of the fly, as well as in the mushroom bodies of the central brain.

The catalysed reaction is O-phospho-L-seryl-[protein] + H2O = L-seryl-[protein] + phosphate. It carries out the reaction O-phospho-L-threonyl-[protein] + H2O = L-threonyl-[protein] + phosphate. Phosphatase required to prevent light-induced retinal degeneration. In Drosophila melanogaster (Fruit fly), this protein is Serine/threonine-protein phosphatase rdgC (rdgC).